The following is a 178-amino-acid chain: Large ribosomal subunit protein uL6 (178 aa).

It belongs to the universal ribosomal protein uL6 family. In terms of assembly, part of the 50S ribosomal subunit.

Its function is as follows. This protein binds to the 23S rRNA, and is important in its secondary structure. It is located near the subunit interface in the base of the L7/L12 stalk, and near the tRNA binding site of the peptidyltransferase center. This Micrococcus luteus (Micrococcus lysodeikticus) protein is Large ribosomal subunit protein uL6.